We begin with the raw amino-acid sequence, 370 residues long: GTPase Obg (370 aa).

The 159-residue stretch at 1–159 (MKFIDEARIE…RMLRLELKVL (159 aa)) folds into the Obg domain. Residues 160 to 334 (ADVGLLGMPN…LCYAIYDYLA (175 aa)) form the OBG-type G domain. Residues 166-173 (GMPNAGKS), 191-195 (FTTLA), 213-216 (DIPG), 284-287 (NKLD), and 315-317 (SAL) contribute to the GTP site. Serine 173 and threonine 193 together coordinate Mg(2+). The interval 344 to 370 (EEEDLATDVRFRDAPPADGGATPGGDA) is disordered.

It belongs to the TRAFAC class OBG-HflX-like GTPase superfamily. OBG GTPase family. Monomer. Requires Mg(2+) as cofactor.

The protein localises to the cytoplasm. In terms of biological role, an essential GTPase which binds GTP, GDP and possibly (p)ppGpp with moderate affinity, with high nucleotide exchange rates and a fairly low GTP hydrolysis rate. Plays a role in control of the cell cycle, stress response, ribosome biogenesis and in those bacteria that undergo differentiation, in morphogenesis control. This Burkholderia ambifaria (strain MC40-6) protein is GTPase Obg.